The following is a 450-amino-acid chain: Exodeoxyribonuclease 7 large subunit (450 aa).

The protein belongs to the XseA family. Heterooligomer composed of large and small subunits.

The protein localises to the cytoplasm. It carries out the reaction Exonucleolytic cleavage in either 5'- to 3'- or 3'- to 5'-direction to yield nucleoside 5'-phosphates.. Bidirectionally degrades single-stranded DNA into large acid-insoluble oligonucleotides, which are then degraded further into small acid-soluble oligonucleotides. In Listeria monocytogenes serotype 4b (strain CLIP80459), this protein is Exodeoxyribonuclease 7 large subunit.